Consider the following 109-residue polypeptide: Meiotically up-regulated gene 153 protein (109 aa).

The protein resides in the mitochondrion. Has a role in meiosis. The protein is Meiotically up-regulated gene 153 protein (mug153) of Schizosaccharomyces pombe (strain 972 / ATCC 24843) (Fission yeast).